The chain runs to 200 residues: Adenylate kinase (200 aa).

Glycine 10 to threonine 15 provides a ligand contact to ATP. The segment at serine 30–valine 59 is NMP. AMP contacts are provided by residues threonine 31, arginine 36, asparagine 57 to valine 59, glycine 84 to arginine 87, and glutamine 91. An LID region spans residues glycine 125–aspartate 163. Residues arginine 126 and valine 136 to phenylalanine 137 each bind ATP. AMP is bound by residues arginine 160 and arginine 171.

The protein belongs to the adenylate kinase family. Monomer.

It localises to the cytoplasm. It carries out the reaction AMP + ATP = 2 ADP. The protein operates within purine metabolism; AMP biosynthesis via salvage pathway; AMP from ADP: step 1/1. Its function is as follows. Catalyzes the reversible transfer of the terminal phosphate group between ATP and AMP. Plays an important role in cellular energy homeostasis and in adenine nucleotide metabolism. The protein is Adenylate kinase of Streptomyces lividans.